The primary structure comprises 667 residues: WD40 repeat-containing protein DDB_G0271002 (667 aa).

WD repeat units follow at residues 165 to 204 (NHGVSTWGIAICPSKPLIAVSSNSHKITIWNLDDENPQET) and 210 to 249 (KHKHNIPSIDFSPCGNYLVSVSIDKNIRIWDVNKRQLLRI). Residues 278-293 (SSNSRDNNNNNSNSNN) are compositionally biased toward low complexity. 3 disordered regions span residues 278-301 (SSNSRDNNNNNSNSNNNGGGGIII), 316-345 (LVENNQEVEPMPEEEEEEEEEEVNQVDNDD), and 389-440 (DIIF…ATTT). The span at 325–345 (PMPEEEEEEEEEEVNQVDNDD) shows a compositional bias: acidic residues. The segment covering 400-410 (NQHQQQQQQNQ) has biased composition (low complexity). A compositionally biased stretch (acidic residues) spans 411–428 (EIEEEGQEGQEEQEDGTE). Low complexity predominate over residues 429 to 440 (NENNQGTIATTT).

This Dictyostelium discoideum (Social amoeba) protein is WD40 repeat-containing protein DDB_G0271002.